The primary structure comprises 621 residues: F-box only protein 21 (621 aa).

Residues 28 to 77 form the F-box domain; that stretch reads SCLVNLPGEVLEYILCCGSLTAADIGRVSSTCRRLRELCQSSGKVWKEQF.

Interacts with SKP1 and CUL1.

Functionally, substrate-recognition component of the SCF (SKP1-CUL1-F-box protein)-type E3 ubiquitin ligase complex. The protein is F-box only protein 21 (FBXO21) of Pongo abelii (Sumatran orangutan).